The primary structure comprises 82 residues: Exodeoxyribonuclease 7 small subunit (82 aa).

It belongs to the XseB family. In terms of assembly, heterooligomer composed of large and small subunits.

The protein localises to the cytoplasm. It carries out the reaction Exonucleolytic cleavage in either 5'- to 3'- or 3'- to 5'-direction to yield nucleoside 5'-phosphates.. Functionally, bidirectionally degrades single-stranded DNA into large acid-insoluble oligonucleotides, which are then degraded further into small acid-soluble oligonucleotides. The protein is Exodeoxyribonuclease 7 small subunit of Mycobacterium avium (strain 104).